We begin with the raw amino-acid sequence, 255 residues long: Pimeloyl-[acyl-carrier protein] methyl ester esterase (255 aa).

Substrate-binding positions include tryptophan 18, 78-79 (SL), and 139-143 (FLALD). The Nucleophile role is filled by serine 78. Active-site residues include aspartate 203 and histidine 233. Histidine 233 is a binding site for substrate.

Belongs to the AB hydrolase superfamily. Carboxylesterase BioH family. As to quaternary structure, monomer.

Its subcellular location is the cytoplasm. The enzyme catalyses 6-carboxyhexanoyl-[ACP] methyl ester + H2O = 6-carboxyhexanoyl-[ACP] + methanol + H(+). The protein operates within cofactor biosynthesis; biotin biosynthesis. Its function is as follows. The physiological role of BioH is to remove the methyl group introduced by BioC when the pimeloyl moiety is complete. It allows to synthesize pimeloyl-ACP via the fatty acid synthetic pathway through the hydrolysis of the ester bonds of pimeloyl-ACP esters. The sequence is that of Pimeloyl-[acyl-carrier protein] methyl ester esterase from Xylella fastidiosa (strain 9a5c).